Reading from the N-terminus, the 365-residue chain is Phospho-N-acetylmuramoyl-pentapeptide-transferase (365 aa).

10 consecutive transmembrane segments (helical) span residues 22–42 (YISV…LALG), 74–94 (TMGG…WGDL), 95–115 (TSIY…IGFF), 134–154 (KFAL…YLLS), 168–188 (SLYI…IING), 201–221 (GLAI…AYIE), 240–260 (LAEV…FLWF), 267–287 (VFMG…IAVM), 292–312 (LIFF…MLQV), and 342–362 (KVVI…LAAI).

This sequence belongs to the glycosyltransferase 4 family. MraY subfamily. Requires Mg(2+) as cofactor.

The protein localises to the cell inner membrane. It catalyses the reaction UDP-N-acetyl-alpha-D-muramoyl-L-alanyl-gamma-D-glutamyl-meso-2,6-diaminopimeloyl-D-alanyl-D-alanine + di-trans,octa-cis-undecaprenyl phosphate = di-trans,octa-cis-undecaprenyl diphospho-N-acetyl-alpha-D-muramoyl-L-alanyl-D-glutamyl-meso-2,6-diaminopimeloyl-D-alanyl-D-alanine + UMP. Its pathway is cell wall biogenesis; peptidoglycan biosynthesis. Catalyzes the initial step of the lipid cycle reactions in the biosynthesis of the cell wall peptidoglycan: transfers peptidoglycan precursor phospho-MurNAc-pentapeptide from UDP-MurNAc-pentapeptide onto the lipid carrier undecaprenyl phosphate, yielding undecaprenyl-pyrophosphoryl-MurNAc-pentapeptide, known as lipid I. This Francisella tularensis subsp. novicida (strain U112) protein is Phospho-N-acetylmuramoyl-pentapeptide-transferase.